Reading from the N-terminus, the 337-residue chain is Anthranilate phosphoribosyltransferase (337 aa).

5-phospho-alpha-D-ribose 1-diphosphate is bound by residues Gly-78, 81-82 (GD), Thr-86, 88-91 (NIST), 106-114 (KHGNRSVSS), and Ser-118. Gly-78 contacts anthranilate. Mg(2+) is bound at residue Ser-90. Asn-109 is a binding site for anthranilate. Arg-164 is an anthranilate binding site. 2 residues coordinate Mg(2+): Asp-222 and Glu-223.

It belongs to the anthranilate phosphoribosyltransferase family. In terms of assembly, homodimer. Mg(2+) serves as cofactor.

It carries out the reaction N-(5-phospho-beta-D-ribosyl)anthranilate + diphosphate = 5-phospho-alpha-D-ribose 1-diphosphate + anthranilate. It functions in the pathway amino-acid biosynthesis; L-tryptophan biosynthesis; L-tryptophan from chorismate: step 2/5. In terms of biological role, catalyzes the transfer of the phosphoribosyl group of 5-phosphorylribose-1-pyrophosphate (PRPP) to anthranilate to yield N-(5'-phosphoribosyl)-anthranilate (PRA). In Idiomarina loihiensis (strain ATCC BAA-735 / DSM 15497 / L2-TR), this protein is Anthranilate phosphoribosyltransferase.